A 221-amino-acid polypeptide reads, in one-letter code: 7-cyano-7-deazaguanine synthase (221 aa).

An ATP-binding site is contributed by 8–18 (MSGGMDSTLCA). Zn(2+)-binding residues include Cys187, Cys195, Cys198, and Cys201.

It belongs to the QueC family. The cofactor is Zn(2+).

It catalyses the reaction 7-carboxy-7-deazaguanine + NH4(+) + ATP = 7-cyano-7-deazaguanine + ADP + phosphate + H2O + H(+). It functions in the pathway purine metabolism; 7-cyano-7-deazaguanine biosynthesis. Functionally, catalyzes the ATP-dependent conversion of 7-carboxy-7-deazaguanine (CDG) to 7-cyano-7-deazaguanine (preQ(0)). The protein is 7-cyano-7-deazaguanine synthase of Campylobacter concisus (strain 13826).